The sequence spans 243 residues: UPF0758 protein AM1_4368 (243 aa).

The MPN domain maps to 113–235; the sequence is VIDDPAVAAA…FTSLRQTTSL (123 aa). 3 residues coordinate Zn(2+): His-184, His-186, and Asp-197. The JAMM motif signature appears at 184–197; the sequence is HNHPSGQTDPSPED.

This sequence belongs to the UPF0758 family.

In Acaryochloris marina (strain MBIC 11017), this protein is UPF0758 protein AM1_4368.